A 708-amino-acid polypeptide reads, in one-letter code: Protein psiF (708 aa).

An N-terminal signal peptide occupies residues 1-19 (MKYLFIAIILILYCSFTKA). At 20 to 643 (DQKKFLVNMY…QSTAVKVGVG (624 aa)) the chain is on the extracellular side. Residues Asn78, Asn116, Asn222, Asn317, Asn318, Asn371, Asn498, and Asn600 are each glycosylated (N-linked (GlcNAc...) asparagine). Residues 103–263 (TQTAGSQNYY…YDYCGICNGK (161 aa)) form the PA14 domain. Residues 644–664 (IGAAAAAGIAIGGAVAAGLAI) form a helical membrane-spanning segment. Residues 665–708 (FGGKKAYDTWKTSRGNVMTGSQSNPLYTQNQNNGNNPLYSAPAE) are Cytoplasmic-facing. Over residues 682–702 (MTGSQSNPLYTQNQNNGNNPL) the composition is skewed to polar residues. The interval 682–708 (MTGSQSNPLYTQNQNNGNNPLYSAPAE) is disordered.

The protein belongs to the prespore-cell-inducing factor family. Forms a complex with dicB.

The protein localises to the membrane. Its subcellular location is the secreted. Its function is as follows. Acts as a quorum sensing protein regulating discoidin gene expression during growth and development. D.discoideum is a single-celled amoebae and switches to multicellular development when food becomes limited. As the growing cells reach a high density, they begin expressing discoidin genes. The ability of psiF/dicA to induce discoidin gene expression when present in conditioned medium, suggests that it allows cells to sense their local density. The polypeptide is Protein psiF (psiF) (Dictyostelium discoideum (Social amoeba)).